We begin with the raw amino-acid sequence, 320 residues long: tRNA dimethylallyltransferase (320 aa).

14 to 21 contacts ATP; that stretch reads GPTASGKT. Substrate is bound at residue 16–21; it reads TASGKT. Interaction with substrate tRNA regions lie at residues 39 to 42 and 163 to 167; these read DSAL and QRLQR.

It belongs to the IPP transferase family. In terms of assembly, monomer. It depends on Mg(2+) as a cofactor.

The enzyme catalyses adenosine(37) in tRNA + dimethylallyl diphosphate = N(6)-dimethylallyladenosine(37) in tRNA + diphosphate. In terms of biological role, catalyzes the transfer of a dimethylallyl group onto the adenine at position 37 in tRNAs that read codons beginning with uridine, leading to the formation of N6-(dimethylallyl)adenosine (i(6)A). The chain is tRNA dimethylallyltransferase from Thioalkalivibrio sulfidiphilus (strain HL-EbGR7).